Consider the following 65-residue polypeptide: Large ribosomal subunit protein bL35 (65 aa).

The protein belongs to the bacterial ribosomal protein bL35 family.

The protein is Large ribosomal subunit protein bL35 of Yersinia pseudotuberculosis serotype O:1b (strain IP 31758).